Here is a 418-residue protein sequence, read N- to C-terminus: RuvB-like helicase 2 (418 aa).

ATP is bound at residue 65-72 (GDRGSGKT).

The protein belongs to the RuvB family. Component of the SWR1 chromatin remodeling complex, the INO80 chromatin remodeling complex, and of the R2TP complex.

It localises to the nucleus. It catalyses the reaction ATP + H2O = ADP + phosphate + H(+). In terms of biological role, DNA helicase which participates in several chromatin remodeling complexes, including the SWR1 and the INO80 complexes. The SWR1 complex mediates the ATP-dependent exchange of histone H2A for the H2A variant HZT1 leading to transcriptional regulation of selected genes by chromatin remodeling. The INO80 complex remodels chromatin by shifting nucleosomes and is involved in DNA repair. Also involved in pre-rRNA processing. In Encephalitozoon cuniculi (strain GB-M1) (Microsporidian parasite), this protein is RuvB-like helicase 2 (RVB2).